The following is a 204-amino-acid chain: UPF0228 protein MA_0511 (204 aa).

The protein belongs to the UPF0228 family.

The chain is UPF0228 protein MA_0511 from Methanosarcina acetivorans (strain ATCC 35395 / DSM 2834 / JCM 12185 / C2A).